A 228-amino-acid polypeptide reads, in one-letter code: L-ribulose-5-phosphate 4-epimerase UlaF (228 aa).

Substrate contacts are provided by residues 26–27, 43–44, and 72–73; these read GN, SG, and SS. Asp74, His93, and His95 together coordinate Zn(2+). Asp118 (proton donor/acceptor) is an active-site residue. His167 is a binding site for Zn(2+). Tyr225 serves as the catalytic Proton donor/acceptor.

This sequence belongs to the aldolase class II family. AraD/FucA subfamily. Requires Zn(2+) as cofactor.

The catalysed reaction is L-ribulose 5-phosphate = D-xylulose 5-phosphate. Its pathway is cofactor degradation; L-ascorbate degradation; D-xylulose 5-phosphate from L-ascorbate: step 4/4. In terms of biological role, catalyzes the isomerization of L-ribulose 5-phosphate to D-xylulose 5-phosphate. Is involved in the anaerobic L-ascorbate utilization. The chain is L-ribulose-5-phosphate 4-epimerase UlaF from Escherichia fergusonii (strain ATCC 35469 / DSM 13698 / CCUG 18766 / IAM 14443 / JCM 21226 / LMG 7866 / NBRC 102419 / NCTC 12128 / CDC 0568-73).